A 247-amino-acid chain; its full sequence is Phycocyanobilin:ferredoxin oxidoreductase (247 aa).

It belongs to the HY2 family.

The enzyme catalyses (2R,3Z)-phycocyanobilin + 4 oxidized [2Fe-2S]-[ferredoxin] = biliverdin IXalpha + 4 reduced [2Fe-2S]-[ferredoxin] + 4 H(+). Its function is as follows. Catalyzes the four-electron reduction of biliverdin IX-alpha (2-electron reduction at both the A and D rings); the reaction proceeds via an isolatable 2-electron intermediate, 181,182-dihydrobiliverdin. This Prochlorococcus marinus (strain SARG / CCMP1375 / SS120) protein is Phycocyanobilin:ferredoxin oxidoreductase (pcyA).